The sequence spans 170 residues: uncharacterized protein (170 aa).

This is an uncharacterized protein from Bacillus subtilis (strain 168).